Consider the following 396-residue polypeptide: 1-deoxy-D-xylulose 5-phosphate reductoisomerase (396 aa).

Residues threonine 13, glycine 14, serine 15, isoleucine 16, and asparagine 127 each contribute to the NADPH site. A 1-deoxy-D-xylulose 5-phosphate-binding site is contributed by lysine 128. Glutamate 129 provides a ligand contact to NADPH. Residue aspartate 153 coordinates Mn(2+). 1-deoxy-D-xylulose 5-phosphate contacts are provided by serine 154, glutamate 155, serine 184, and histidine 207. Residue glutamate 155 coordinates Mn(2+). Glycine 213 provides a ligand contact to NADPH. 4 residues coordinate 1-deoxy-D-xylulose 5-phosphate: serine 220, asparagine 225, lysine 226, and glutamate 229. Glutamate 229 is a Mn(2+) binding site.

Belongs to the DXR family. It depends on Mg(2+) as a cofactor. Requires Mn(2+) as cofactor.

It catalyses the reaction 2-C-methyl-D-erythritol 4-phosphate + NADP(+) = 1-deoxy-D-xylulose 5-phosphate + NADPH + H(+). Its pathway is isoprenoid biosynthesis; isopentenyl diphosphate biosynthesis via DXP pathway; isopentenyl diphosphate from 1-deoxy-D-xylulose 5-phosphate: step 1/6. Functionally, catalyzes the NADPH-dependent rearrangement and reduction of 1-deoxy-D-xylulose-5-phosphate (DXP) to 2-C-methyl-D-erythritol 4-phosphate (MEP). This Pseudomonas putida (strain W619) protein is 1-deoxy-D-xylulose 5-phosphate reductoisomerase.